Here is a 617-residue protein sequence, read N- to C-terminus: Vacuolar protein sorting-associated protein 33B (617 aa).

The protein belongs to the STXBP/unc-18/SEC1 family. As to quaternary structure, probable core component of the class C core vacuole/endosome tethering (CORVET) complex. The common core is composed of the class C Vps proteins vps-11, vps-16 and vps-18, and which further associates with vps-8 and vps-33.2. Interacts with spe-39. In terms of tissue distribution, broadly expressed in somatic tissues including the pharynx, intestine, spermatheca, and in coelomocytes. Expressed in the lining of the gut lumen.

Its subcellular location is the early endosome. It localises to the late endosome membrane. The protein localises to the lysosome membrane. The protein resides in the cytoplasmic vesicle. It is found in the clathrin-coated vesicle. Its subcellular location is the recycling endosome. Plays a role in vesicle-mediated protein trafficking to lysosomal compartments and in membrane docking/fusion reactions of late endosomes/lysosomes. Believed to act as a component of the putative CORVET endosomal tethering complex which is proposed to be involved in the rab-5-to-rab-7 endosome conversion probably implicating sand-1, and via binding SNAREs and SNARE complexes to mediate tethering and docking events during SNARE-mediated membrane fusion. The CORVET complex is proposed to function as a rab-5 effector to mediate early endosome fusion probably in specific endosome subpopulations. Most likely within the CORVET complex, it is involved in the fusion of endocytic compartments. Required for sperm development and function. This Caenorhabditis elegans protein is Vacuolar protein sorting-associated protein 33B.